The following is a 60-amino-acid chain: uncharacterized protein (60 aa).

Residues 19-39 (LSIMCGCSIYFLLLVFILTFY) traverse the membrane as a helical segment.

The protein localises to the membrane. This is an uncharacterized protein from Saccharomyces cerevisiae (strain ATCC 204508 / S288c) (Baker's yeast).